Reading from the N-terminus, the 375-residue chain is Pectate lyase 1 (375 aa).

A signal peptide spans 1 to 21 (MASCTLLAVLVFLCAIVSCFS). The cysteines at positions 28 and 45 are disulfide-linked. N-linked (GlcNAc...) asparagine glycosylation occurs at Asn-110. Cys-128 and Cys-147 are oxidised to a cystine. A glycan (N-linked (GlcNAc...) asparagine) is linked at Asn-148. Ca(2+) is bound at residue Asp-170. An N-linked (GlcNAc...) asparagine glycan is attached at Asn-178. Ca(2+)-binding residues include Asp-194 and Asp-198. Arg-250 is a catalytic residue. N-linked (GlcNAc...) asparagine glycosylation occurs at Asn-293. A disulfide bond links Cys-306 and Cys-312. A glycan (N-linked (GlcNAc...) asparagine) is linked at Asn-352.

This sequence belongs to the polysaccharide lyase 1 family. Amb a subfamily. The cofactor is Ca(2+).

The catalysed reaction is Eliminative cleavage of (1-&gt;4)-alpha-D-galacturonan to give oligosaccharides with 4-deoxy-alpha-D-galact-4-enuronosyl groups at their non-reducing ends.. It participates in glycan metabolism; pectin degradation; 2-dehydro-3-deoxy-D-gluconate from pectin: step 2/5. Functionally, has pectate lyase activity. In Chamaecyparis obtusa (Hinoki false-cypress), this protein is Pectate lyase 1.